The primary structure comprises 694 residues: Methionine--tRNA ligase (694 aa).

The 'HIGH' region signature appears at 12-22 (PYANGPLHLGH). The Zn(2+) site is built by Cys-143, Cys-146, Cys-156, and Cys-159. The 'KMSKS' region motif lies at 330–334 (KMSKS). Residue Lys-333 participates in ATP binding. The interval 550 to 577 (LAAPATPATASKPAPAKADAKPAAAANP) is disordered. Low complexity predominate over residues 551 to 575 (AAPATPATASKPAPAKADAKPAAAA). Positions 591–694 (DFAKLDLRIG…SGAQPGMPVR (104 aa)) constitute a tRNA-binding domain.

It belongs to the class-I aminoacyl-tRNA synthetase family. MetG type 1 subfamily. As to quaternary structure, homodimer. Zn(2+) serves as cofactor.

It localises to the cytoplasm. It catalyses the reaction tRNA(Met) + L-methionine + ATP = L-methionyl-tRNA(Met) + AMP + diphosphate. In terms of biological role, is required not only for elongation of protein synthesis but also for the initiation of all mRNA translation through initiator tRNA(fMet) aminoacylation. The polypeptide is Methionine--tRNA ligase (Xanthomonas axonopodis pv. citri (strain 306)).